We begin with the raw amino-acid sequence, 392 residues long: Putative non-inhibitory serpin-10 (392 aa).

The RCL stretch occupies residues 333 to 357; the sequence is GTTAVEATYSCCSPTYSGPESPKPR.

It belongs to the serpin family.

This Oryza sativa subsp. japonica (Rice) protein is Putative non-inhibitory serpin-10.